The chain runs to 688 residues: Polyphosphate kinase (688 aa).

N45 contributes to the ATP binding site. Positions 375 and 405 each coordinate Mg(2+). Residues 430-464 form the PLD phosphodiesterase domain; that stretch reads PGLKIHAKLFLISRKENGEVVRYAHIGTGNFNEKT. The active-site Phosphohistidine intermediate is H435. ATP contacts are provided by Y468, R564, and H592.

It belongs to the polyphosphate kinase 1 (PPK1) family. Requires Mg(2+) as cofactor. In terms of processing, an intermediate of this reaction is the autophosphorylated ppk in which a phosphate is covalently linked to a histidine residue through a N-P bond.

The catalysed reaction is [phosphate](n) + ATP = [phosphate](n+1) + ADP. In terms of biological role, catalyzes the reversible transfer of the terminal phosphate of ATP to form a long-chain polyphosphate (polyP). This Escherichia coli O6:H1 (strain CFT073 / ATCC 700928 / UPEC) protein is Polyphosphate kinase.